We begin with the raw amino-acid sequence, 294 residues long: G-protein coupled receptor homolog U51 (294 aa).

Residues 1 to 14 (MKNIDLTNWKLLAE) are Extracellular-facing. Residues 15–35 (IYEYLFFFSFFFLCLLVIIVV) form a helical membrane-spanning segment. The Cytoplasmic portion of the chain corresponds to 36 to 47 (KFNNSTVGREYT). A helical transmembrane segment spans residues 48–68 (FSTFSGMLVYILLLPVKMGML). Residues 69–79 (TKMWDVSTDYC) lie on the Extracellular side of the membrane. The helical transmembrane segment at 80 to 102 (IILMFLSDFSFIFSSWALTLLAL) threads the bilayer. The Cytoplasmic portion of the chain corresponds to 103-119 (ERINNFSFSEIKVNETK). A helical transmembrane segment spans residues 120–140 (ILKQMSFPIIWVTSIFQAVQI). Over 141 to 166 (SMKYKKSQMNLEDDYCLLAIERSAEE) the chain is Extracellular. Residues 167–187 (AWILLMYTVVIPTFIVFFYVL) traverse the membrane as a helical segment. The Cytoplasmic segment spans residues 188 to 200 (NKRFLFLERDLNS). Residues 201–221 (IVTHLSLFLFFGALCFFPASV) traverse the membrane as a helical segment. At 222 to 236 (LNEFNCNRLFYGLHE) the chain is on the extracellular side. The chain crosses the membrane as a helical span at residues 237-257 (LLIVCLELKIFYVPTMTYIIS). The Cytoplasmic segment spans residues 258–294 (CENYRLAAKAFFCKCFKPCFLMPSLRKLQQPTKSTQF).

The protein belongs to the G-protein coupled receptor 1 family.

The protein localises to the host cell membrane. The chain is G-protein coupled receptor homolog U51 (U51) from Human herpesvirus 7 (strain JI) (HHV-7).